A 290-amino-acid polypeptide reads, in one-letter code: ADP-dependent (S)-NAD(P)H-hydrate dehydratase (290 aa).

Positions 5-278 constitute a YjeF C-terminal domain; the sequence is NQTLLEKVII…RYLPKIMKII (274 aa). (6S)-NADPHX contacts are provided by alanine 40, glycine 103, and histidine 152. Glycine 218 serves as a coordination point for AMP. Aspartate 219 contributes to the (6S)-NADPHX binding site.

This sequence belongs to the NnrD/CARKD family. In terms of assembly, homotetramer. Mg(2+) serves as cofactor.

It catalyses the reaction (6S)-NADHX + ADP = AMP + phosphate + NADH + H(+). The catalysed reaction is (6S)-NADPHX + ADP = AMP + phosphate + NADPH + H(+). Functionally, catalyzes the dehydration of the S-form of NAD(P)HX at the expense of ADP, which is converted to AMP. Together with NAD(P)HX epimerase, which catalyzes the epimerization of the S- and R-forms, the enzyme allows the repair of both epimers of NAD(P)HX, a damaged form of NAD(P)H that is a result of enzymatic or heat-dependent hydration. The chain is ADP-dependent (S)-NAD(P)H-hydrate dehydratase from Streptococcus pneumoniae (strain ATCC BAA-255 / R6).